Here is a 410-residue protein sequence, read N- to C-terminus: Peptidase T (410 aa).

His-79 is a binding site for Zn(2+). Asp-81 is a catalytic residue. Asp-142 lines the Zn(2+) pocket. Glu-176 functions as the Proton acceptor in the catalytic mechanism. The Zn(2+) site is built by Glu-177, Asp-199, and His-381.

It belongs to the peptidase M20B family. Zn(2+) is required as a cofactor.

The protein resides in the cytoplasm. It carries out the reaction Release of the N-terminal residue from a tripeptide.. Cleaves the N-terminal amino acid of tripeptides. The chain is Peptidase T from Bacillus thuringiensis subsp. konkukian (strain 97-27).